The sequence spans 348 residues: GTPase Obg (348 aa).

In terms of domain architecture, Obg spans 1–159; sequence MKFLDQAKIY…KTIILRLKLI (159 aa). The 168-residue stretch at 160–327 folds into the OBG-type G domain; the sequence is ADAGLVGLPN…VLRLAADEIW (168 aa). GTP-binding positions include 166–173, 191–195, 212–215, 279–282, and 308–310; these read GLPNAGKS, FTTLT, DIPG, NKMD, and SGV. The Mg(2+) site is built by Ser-173 and Thr-193.

This sequence belongs to the TRAFAC class OBG-HflX-like GTPase superfamily. OBG GTPase family. As to quaternary structure, monomer. The cofactor is Mg(2+).

It localises to the cytoplasm. Functionally, an essential GTPase which binds GTP, GDP and possibly (p)ppGpp with moderate affinity, with high nucleotide exchange rates and a fairly low GTP hydrolysis rate. Plays a role in control of the cell cycle, stress response, ribosome biogenesis and in those bacteria that undergo differentiation, in morphogenesis control. This is GTPase Obg from Parvibaculum lavamentivorans (strain DS-1 / DSM 13023 / NCIMB 13966).